The sequence spans 318 residues: Isoflavone reductase (318 aa).

NADP(+)-binding positions include 11 to 17, Arg36, and Lys44; that span reads GATGAIG. Lys144 (proton acceptor) is an active-site residue. Arg148 is an NADP(+) binding site.

The protein belongs to the NmrA-type oxidoreductase family. Isoflavone reductase subfamily.

It catalyses the reaction (3R)-vestitone + NADP(+) = 2'-hydroxyformononetin + NADPH + 2 H(+). It participates in phytoalexin biosynthesis; pterocarpan phytoalexin biosynthesis. Reduces achiral isoflavones to chiral isoflavanones during the biosynthesis of chiral pterocarpan phytoalexins. The reduction product (sophrol) is a third isomer, which represents the penultimate intermediate in the synthesis of the phytoalexin (+)-pisatin, the major phytoalexin in pea. This is Isoflavone reductase (IFR) from Pisum sativum (Garden pea).